Here is a 178-residue protein sequence, read N- to C-terminus: Stathmin-2-B (178 aa).

Residues 38-178 form the SLD domain; it reads DDMEVKQLNK…KNKEQLELSG (141 aa). The stretch at 75-178 forms a coiled coil; sequence KRKDVSLEEI…KNKEQLELSG (104 aa).

The protein belongs to the stathmin family. As to expression, nervous tissue.

Its subcellular location is the cytoplasm. It is found in the membrane. It localises to the cell projection. The protein resides in the lamellipodium. The sequence is that of Stathmin-2-B (stmn2-b) from Xenopus laevis (African clawed frog).